A 211-amino-acid polypeptide reads, in one-letter code: MTGVFITLEGGDGVGKSTQSALLRGWLEDEGHEVVVTREPGGSELGVEIREIVLHRRGHIAPRAEALLYAADRAHHVETVVRPALDRGAVVLQDRYLDSSVAYQGAGRVLDAGEIRELSLWAAQGLLPDLTVLLDLDQAAARVRLDAARTRFDRLESERADFHERVRQAFLGLAGAEPERFLVVDAARPREEIAAAIRTRAQALIAAGASA.

ATP is bound at residue 10-17 (GGDGVGKS).

This sequence belongs to the thymidylate kinase family.

It carries out the reaction dTMP + ATP = dTDP + ADP. Functionally, phosphorylation of dTMP to form dTDP in both de novo and salvage pathways of dTTP synthesis. The protein is Thymidylate kinase of Clavibacter michiganensis subsp. michiganensis (strain NCPPB 382).